A 119-amino-acid polypeptide reads, in one-letter code: MKKIAFVFSYVPHGVSLGREGLDLLLSVSIMNSKISVFFIGDGIFQLLKNQKPDEILSKNYVLSFKILPFFGIYDFFLCNESLKERGLFKKTDFLLDVSILSAIEIRNKLKNSDLIINF.

This sequence belongs to the DsrF/TusC family. In terms of assembly, heterohexamer, formed by a dimer of trimers. The hexameric TusBCD complex contains 2 copies each of TusB, TusC and TusD. The TusBCD complex interacts with TusE.

Its subcellular location is the cytoplasm. Its function is as follows. Part of a sulfur-relay system required for 2-thiolation of 5-methylaminomethyl-2-thiouridine (mnm(5)s(2)U) at tRNA wobble positions. This is Protein TusC from Buchnera aphidicola subsp. Baizongia pistaciae (strain Bp).